A 142-amino-acid polypeptide reads, in one-letter code: ATP synthase epsilon chain (142 aa).

Belongs to the ATPase epsilon chain family. In terms of assembly, F-type ATPases have 2 components, CF(1) - the catalytic core - and CF(0) - the membrane proton channel. CF(1) has five subunits: alpha(3), beta(3), gamma(1), delta(1), epsilon(1). CF(0) has three main subunits: a, b and c.

The protein localises to the cell inner membrane. Functionally, produces ATP from ADP in the presence of a proton gradient across the membrane. This Pasteurella multocida (strain Pm70) protein is ATP synthase epsilon chain.